A 144-amino-acid chain; its full sequence is MKKVMTATEIMEMIPNRYPICYIDYVDEIIPNEKIIATKNVTINEEFFQGHFPGNPTMPGVLIIEALAQVGSILILKMDQFEGETAYIGGINKAKFRQKVVPGDVLKLHFEIVKLRDFVGIGKATAYVEDKKVCECELTFIVGR.

Residue His-51 is part of the active site.

This sequence belongs to the thioester dehydratase family. FabZ subfamily.

The protein localises to the cytoplasm. It carries out the reaction a (3R)-hydroxyacyl-[ACP] = a (2E)-enoyl-[ACP] + H2O. Functionally, involved in unsaturated fatty acids biosynthesis. Catalyzes the dehydration of short chain beta-hydroxyacyl-ACPs and long chain saturated and unsaturated beta-hydroxyacyl-ACPs. The chain is 3-hydroxyacyl-[acyl-carrier-protein] dehydratase FabZ (fabZ1) from Enterococcus faecalis (strain ATCC 700802 / V583).